The following is a 462-amino-acid chain: Chitinase 1 (462 aa).

A signal peptide spans 1–17; sequence MILNLIILLAISIVASA. The GH18 domain occupies 18-291; sequence SNIAAYWGQN…NQLYQALSGS (274 aa). A glycan (N-linked (GlcNAc...) asparagine) is linked at Asn-57. Residue Glu-147 is the Proton donor of the active site.

This sequence belongs to the glycosyl hydrolase 18 family. Chitinase class III subfamily.

It localises to the secreted. It carries out the reaction Random endo-hydrolysis of N-acetyl-beta-D-glucosaminide (1-&gt;4)-beta-linkages in chitin and chitodextrins.. This chain is Chitinase 1 (CHT1), found in Candida albicans (Yeast).